The sequence spans 132 residues: Aspartate 1-decarboxylase (132 aa).

Serine 25 serves as the catalytic Schiff-base intermediate with substrate; via pyruvic acid. Serine 25 bears the Pyruvic acid (Ser) mark. Substrate is bound at residue threonine 57. Tyrosine 58 functions as the Proton donor in the catalytic mechanism. Substrate is bound at residue 73 to 75 (GAA).

The protein belongs to the PanD family. As to quaternary structure, heterooctamer of four alpha and four beta subunits. The cofactor is pyruvate. Post-translationally, is synthesized initially as an inactive proenzyme, which is activated by self-cleavage at a specific serine bond to produce a beta-subunit with a hydroxyl group at its C-terminus and an alpha-subunit with a pyruvoyl group at its N-terminus.

It is found in the cytoplasm. The catalysed reaction is L-aspartate + H(+) = beta-alanine + CO2. Its pathway is cofactor biosynthesis; (R)-pantothenate biosynthesis; beta-alanine from L-aspartate: step 1/1. Its function is as follows. Catalyzes the pyruvoyl-dependent decarboxylation of aspartate to produce beta-alanine. The chain is Aspartate 1-decarboxylase from Heliobacterium modesticaldum (strain ATCC 51547 / Ice1).